The primary structure comprises 282 residues: Probable endonuclease 4 (282 aa).

Residues His-67, His-107, Glu-144, Asp-178, His-181, His-215, Asp-228, His-230, and Glu-260 each contribute to the Zn(2+) site.

This sequence belongs to the AP endonuclease 2 family. Zn(2+) is required as a cofactor.

The enzyme catalyses Endonucleolytic cleavage to 5'-phosphooligonucleotide end-products.. Endonuclease IV plays a role in DNA repair. It cleaves phosphodiester bonds at apurinic or apyrimidinic (AP) sites, generating a 3'-hydroxyl group and a 5'-terminal sugar phosphate. The chain is Probable endonuclease 4 from Methanoculleus marisnigri (strain ATCC 35101 / DSM 1498 / JR1).